Here is a 41-residue protein sequence, read N- to C-terminus: Photosystem I reaction center subunit VIII (41 aa).

The helical transmembrane segment at 12–32 (WIMIPVTCWLFPVVVMGLLFI) threads the bilayer.

It belongs to the PsaI family.

It localises to the cellular thylakoid membrane. Its function is as follows. May help in the organization of the PsaL subunit. The chain is Photosystem I reaction center subunit VIII from Cyanothece sp. (strain PCC 7425 / ATCC 29141).